The chain runs to 354 residues: 3-dehydroquinate synthase (354 aa).

NAD(+) contacts are provided by residues 100–104 (GATGD), 124–125 (TT), Lys136, Lys145, and 163–166 (FLKT). Residues Glu178, His242, and His256 each coordinate Zn(2+).

It belongs to the sugar phosphate cyclases superfamily. Dehydroquinate synthase family. NAD(+) serves as cofactor. Co(2+) is required as a cofactor. The cofactor is Zn(2+).

The protein resides in the cytoplasm. It catalyses the reaction 7-phospho-2-dehydro-3-deoxy-D-arabino-heptonate = 3-dehydroquinate + phosphate. Its pathway is metabolic intermediate biosynthesis; chorismate biosynthesis; chorismate from D-erythrose 4-phosphate and phosphoenolpyruvate: step 2/7. Functionally, catalyzes the conversion of 3-deoxy-D-arabino-heptulosonate 7-phosphate (DAHP) to dehydroquinate (DHQ). This is 3-dehydroquinate synthase from Staphylococcus aureus (strain Mu50 / ATCC 700699).